The chain runs to 267 residues: 4-hydroxy-tetrahydrodipicolinate reductase (267 aa).

NAD(+)-binding positions include 8-13 (GAAGRM) and Asp-34. Arg-35 contacts NADP(+). NAD(+)-binding positions include 98-100 (GTT) and 122-125 (AANF). His-155 (proton donor/acceptor) is an active-site residue. Residue His-156 coordinates (S)-2,3,4,5-tetrahydrodipicolinate. The Proton donor role is filled by Lys-159. A (S)-2,3,4,5-tetrahydrodipicolinate-binding site is contributed by 165 to 166 (GT).

Belongs to the DapB family.

Its subcellular location is the cytoplasm. The catalysed reaction is (S)-2,3,4,5-tetrahydrodipicolinate + NAD(+) + H2O = (2S,4S)-4-hydroxy-2,3,4,5-tetrahydrodipicolinate + NADH + H(+). It carries out the reaction (S)-2,3,4,5-tetrahydrodipicolinate + NADP(+) + H2O = (2S,4S)-4-hydroxy-2,3,4,5-tetrahydrodipicolinate + NADPH + H(+). It functions in the pathway amino-acid biosynthesis; L-lysine biosynthesis via DAP pathway; (S)-tetrahydrodipicolinate from L-aspartate: step 4/4. In terms of biological role, catalyzes the conversion of 4-hydroxy-tetrahydrodipicolinate (HTPA) to tetrahydrodipicolinate. This Pseudomonas putida (strain ATCC 47054 / DSM 6125 / CFBP 8728 / NCIMB 11950 / KT2440) protein is 4-hydroxy-tetrahydrodipicolinate reductase.